The chain runs to 236 residues: Syntaxin-8 (236 aa).

The Cytoplasmic portion of the chain corresponds to methionine 1 to glycine 215. Positions leucine 42–alanine 65 form a coiled coil. In terms of domain architecture, t-SNARE coiled-coil homology spans glutamine 145 to valine 207. The residue at position 160 (serine 160) is a Phosphoserine. Residues methionine 216–valine 232 form a helical; Anchor for type IV membrane protein membrane-spanning segment. Topologically, residues tryptophan 233 to asparagine 236 are vesicular.

This sequence belongs to the syntaxin family. As to quaternary structure, forms a SNARE complex with STX7, VTI1B and VAMP8 which functions in the homotypic fusion of late endosomes. Part of the SNARE core complex containing STX7, VAMP8 and VTI1B. Interacts with VAMP8. Interacts with HECTD3. Interacts with TPC1. In terms of processing, ubiquitinated by HECTD3.

It localises to the membrane. Its function is as follows. Vesicle trafficking protein that functions in the early secretory pathway, possibly by mediating retrograde transport from cis-Golgi membranes to the ER. This chain is Syntaxin-8 (Stx8), found in Mus musculus (Mouse).